The chain runs to 347 residues: MSSTDDRRFEVLRAIVADYVSTQDPVGSKALVERHNLGVSSATVRNDMAFLEAEGYIAQPHTSSGRVPTDKGYREFVDRIADVKPMSGPERRAILEFLESGVDLDDVLRRGVRLLAQLTRQVAVVQYPSLSASSVRHLEVVALTPARLLLVLITDSGRVDQRIVELGDVLEDEDLSRLRALLGGALEGKRLAAASIAVAELADESPADLRDAVIRSATVLVETLVEHPEDRLVLGGTSNLTRNAADFSGLAGFPGSLRAVLEALEEQVVVLKLLAATQNSGTVTVQIGEETQVEQMRGTSVISTGYGAAGTVFGGVGVLGPTRMDYPGTIASVAAVARYIGEVLSER.

This sequence belongs to the HrcA family.

In terms of biological role, negative regulator of class I heat shock genes (grpE-dnaK-dnaJ and groELS operons). Prevents heat-shock induction of these operons. This is Heat-inducible transcription repressor HrcA from Rhodococcus erythropolis (strain PR4 / NBRC 100887).